The primary structure comprises 446 residues: Histidine--tRNA ligase (446 aa).

This sequence belongs to the class-II aminoacyl-tRNA synthetase family. Homodimer.

It is found in the cytoplasm. The enzyme catalyses tRNA(His) + L-histidine + ATP = L-histidyl-tRNA(His) + AMP + diphosphate + H(+). This is Histidine--tRNA ligase from Paraburkholderia xenovorans (strain LB400).